Here is an 879-residue protein sequence, read N- to C-terminus: Alanine--tRNA ligase (879 aa).

Zn(2+) contacts are provided by H566, H570, C668, and H672.

It belongs to the class-II aminoacyl-tRNA synthetase family. Zn(2+) is required as a cofactor.

It is found in the cytoplasm. It carries out the reaction tRNA(Ala) + L-alanine + ATP = L-alanyl-tRNA(Ala) + AMP + diphosphate. Catalyzes the attachment of alanine to tRNA(Ala) in a two-step reaction: alanine is first activated by ATP to form Ala-AMP and then transferred to the acceptor end of tRNA(Ala). Also edits incorrectly charged Ser-tRNA(Ala) and Gly-tRNA(Ala) via its editing domain. This is Alanine--tRNA ligase from Halalkalibacterium halodurans (strain ATCC BAA-125 / DSM 18197 / FERM 7344 / JCM 9153 / C-125) (Bacillus halodurans).